Reading from the N-terminus, the 692-residue chain is Potassium-transporting ATPase ATP-binding subunit (692 aa).

Helical transmembrane passes span 50–70 (PIMF…FLPS), 74–94 (SIPG…VLFA), 240–260 (LTLI…YLGF), and 266–286 (VLVA…LSAI). Residue Asp319 is the 4-aspartylphosphate intermediate of the active site. ATP is bound by residues Asp356, Glu360, 388-395 (FKAETRMS), and Lys407. Mg(2+)-binding residues include Asp530 and Asp534. Helical transmembrane passes span 600-620 (FAII…LNIM), 628-648 (AILS…PLAM), and 672-692 (GGVI…GLFI).

The protein belongs to the cation transport ATPase (P-type) (TC 3.A.3) family. Type IA subfamily. The system is composed of three essential subunits: KdpA, KdpB and KdpC.

The protein resides in the cell membrane. It carries out the reaction K(+)(out) + ATP + H2O = K(+)(in) + ADP + phosphate + H(+). Functionally, part of the high-affinity ATP-driven potassium transport (or Kdp) system, which catalyzes the hydrolysis of ATP coupled with the electrogenic transport of potassium into the cytoplasm. This subunit is responsible for energy coupling to the transport system and for the release of the potassium ions to the cytoplasm. This Bacillus thuringiensis (strain Al Hakam) protein is Potassium-transporting ATPase ATP-binding subunit.